Consider the following 179-residue polypeptide: NAD(P)H-quinone oxidoreductase subunit J (179 aa).

Belongs to the complex I 30 kDa subunit family. NDH-1 can be composed of about 15 different subunits; different subcomplexes with different compositions have been identified which probably have different functions. In terms of processing, in at one experiment the initiator methionine has been seen to be kept and removed.

It localises to the cellular thylakoid membrane. The enzyme catalyses a plastoquinone + NADH + (n+1) H(+)(in) = a plastoquinol + NAD(+) + n H(+)(out). It carries out the reaction a plastoquinone + NADPH + (n+1) H(+)(in) = a plastoquinol + NADP(+) + n H(+)(out). Functionally, NDH-1 shuttles electrons from an unknown electron donor, via FMN and iron-sulfur (Fe-S) centers, to quinones in the respiratory and/or the photosynthetic chain. The immediate electron acceptor for the enzyme in this species is believed to be plastoquinone. Couples the redox reaction to proton translocation, and thus conserves the redox energy in a proton gradient. Cyanobacterial NDH-1 also plays a role in inorganic carbon-concentration. This chain is NAD(P)H-quinone oxidoreductase subunit J, found in Synechocystis sp. (strain ATCC 27184 / PCC 6803 / Kazusa).